The sequence spans 110 residues: Iron-sulfur cluster assembly protein CyaY (110 aa).

The protein belongs to the frataxin family.

Functionally, involved in iron-sulfur (Fe-S) cluster assembly. May act as a regulator of Fe-S biogenesis. The sequence is that of Iron-sulfur cluster assembly protein CyaY from Pseudomonas entomophila (strain L48).